A 230-amino-acid polypeptide reads, in one-letter code: Ribonuclease 3 (230 aa).

An RNase III domain is found at 7–134; sequence LEELESKLGI…VIAAIYLDKG (128 aa). E47 provides a ligand contact to Mg(2+). The active site involves D51. Mg(2+) is bound by residues D120 and E123. Residue E123 is part of the active site. The DRBM domain maps to 161–230; the sequence is DYKTRLQEIL…ACKALKGLDN (70 aa).

The protein belongs to the ribonuclease III family. Homodimer. Mg(2+) serves as cofactor.

The protein localises to the cytoplasm. The enzyme catalyses Endonucleolytic cleavage to 5'-phosphomonoester.. Digests double-stranded RNA. Involved in the processing of primary rRNA transcript to yield the immediate precursors to the large and small rRNAs (23S and 16S). Processes some mRNAs, and tRNAs when they are encoded in the rRNA operon. Processes pre-crRNA and tracrRNA of type II CRISPR loci if present in the organism. This chain is Ribonuclease 3, found in Clostridium acetobutylicum (strain ATCC 824 / DSM 792 / JCM 1419 / IAM 19013 / LMG 5710 / NBRC 13948 / NRRL B-527 / VKM B-1787 / 2291 / W).